A 388-amino-acid chain; its full sequence is MEHFYRDTWVEVDLDAIEQNVTNALRLYKDREMNLMAVVKANGYGHGAVEVSQAALRAGASYLSVAFLDEALALRKAGIDAPILVMGLVGAEHVQLAIKHRITLTVYQLDWLEQAISRLHTRDKLAIHLKLDTGMGRIGLRRKEDIRSCMDFIASHECFELEGVFTHFATADEKDLTYFKKQCQRFNQWLEYIREWQLPIRYVHCGNSAAGLRFPEKNFNMFRFGIAMYGLTPSPEITDELPFPLKQAFSLKSRLSNVKKLPKGEGISYGATYVTEGAEWIGTLPIGYADGWIRHHSNAGGHVLIDGKRAPFVGRICMDQCMIRLPKKHSIGDTVTLIGESDGKQITMDEVAKRLNTINYEIPCVISWRVPRIYFRDGQIISVKNNLL.

The active-site Proton acceptor; specific for D-alanine is the Lys40. Lys40 is subject to N6-(pyridoxal phosphate)lysine. Arg137 is a substrate binding site. The active-site Proton acceptor; specific for L-alanine is Tyr269. Met318 contacts substrate.

The protein belongs to the alanine racemase family. Requires pyridoxal 5'-phosphate as cofactor.

It carries out the reaction L-alanine = D-alanine. It participates in amino-acid biosynthesis; D-alanine biosynthesis; D-alanine from L-alanine: step 1/1. Catalyzes the interconversion of L-alanine and D-alanine. May also act on other amino acids. In Halalkalibacterium halodurans (strain ATCC BAA-125 / DSM 18197 / FERM 7344 / JCM 9153 / C-125) (Bacillus halodurans), this protein is Alanine racemase (alr).